The sequence spans 150 residues: UPF0260 protein CGSHiGG_00425 (150 aa).

It belongs to the UPF0260 family.

The chain is UPF0260 protein CGSHiGG_00425 from Haemophilus influenzae (strain PittGG).